A 131-amino-acid chain; its full sequence is Large ribosomal subunit protein bL19 (131 aa).

It belongs to the bacterial ribosomal protein bL19 family.

Its function is as follows. This protein is located at the 30S-50S ribosomal subunit interface and may play a role in the structure and function of the aminoacyl-tRNA binding site. In Anaeromyxobacter dehalogenans (strain 2CP-C), this protein is Large ribosomal subunit protein bL19.